A 528-amino-acid polypeptide reads, in one-letter code: Gamma-taxilin (528 aa).

Basic and acidic residues predominate over residues Met-1–Arg-10. Residues Met-1 to Glu-36 are disordered. Arg-12 and Arg-24 each carry omega-N-methylarginine. 4 positions are modified to phosphoserine: Ser-79, Ser-86, Ser-97, and Ser-105. The tract at residues Thr-102–Asn-130 is disordered. Over residues Glu-104 to Pro-118 the composition is skewed to basic and acidic residues. A coiled-coil region spans residues Glu-153 to Ala-464. Tyr-283 carries the post-translational modification Phosphotyrosine. The segment at His-486–Asp-528 is disordered. The segment covering Gln-508–Ser-520 has biased composition (polar residues). Ser-517 carries the phosphoserine modification.

The protein belongs to the taxilin family. In terms of assembly, binds to the C-terminal coiled coil region of syntaxin family members STX1A, STX3A and STX4A. Forms a heterodimer with ATF4 in osteoblasts. In terms of tissue distribution, ubiquitously expressed. Expressed at high level in heart and skeletal muscle. Expressed in brain, placenta, lung, liver, kidney and pancreas.

The protein resides in the nucleus membrane. It localises to the cytoplasm. The protein localises to the cytosol. Functionally, may be involved in intracellular vesicle traffic. Inhibits ATF4-mediated transcription, possibly by dimerizing with ATF4 to form inactive dimers that cannot bind DNA. May be involved in regulating bone mass density through an ATF4-dependent pathway. May be involved in cell cycle progression. The protein is Gamma-taxilin (TXLNG) of Homo sapiens (Human).